Consider the following 367-residue polypeptide: Peptide chain release factor 2 (367 aa).

Q254 is subject to N5-methylglutamine.

Belongs to the prokaryotic/mitochondrial release factor family. In terms of processing, methylated by PrmC. Methylation increases the termination efficiency of RF2.

Its subcellular location is the cytoplasm. Its function is as follows. Peptide chain release factor 2 directs the termination of translation in response to the peptide chain termination codons UGA and UAA. The polypeptide is Peptide chain release factor 2 (Neisseria meningitidis serogroup A / serotype 4A (strain DSM 15465 / Z2491)).